The chain runs to 731 residues: 1,4-alpha-glucan branching enzyme GlgB (731 aa).

Catalysis depends on D411, which acts as the Nucleophile. The active-site Proton donor is E464.

Belongs to the glycosyl hydrolase 13 family. GlgB subfamily. As to quaternary structure, monomer.

The enzyme catalyses Transfers a segment of a (1-&gt;4)-alpha-D-glucan chain to a primary hydroxy group in a similar glucan chain.. Its pathway is glycan biosynthesis; glycogen biosynthesis. Functionally, catalyzes the formation of the alpha-1,6-glucosidic linkages in glycogen by scission of a 1,4-alpha-linked oligosaccharide from growing alpha-1,4-glucan chains and the subsequent attachment of the oligosaccharide to the alpha-1,6 position. In Mycobacterium ulcerans (strain Agy99), this protein is 1,4-alpha-glucan branching enzyme GlgB.